Here is a 353-residue protein sequence, read N- to C-terminus: Photosystem II protein D1 (353 aa).

Thr2 carries the N-acetylthreonine modification. Phosphothreonine is present on Thr2. 3 helical membrane-spanning segments follow: residues 29–46 (YIGW…TATS), 118–133 (HFLL…EWEL), and 142–156 (WIAV…AATA). Residue His118 participates in chlorophyll a binding. Tyr126 provides a ligand contact to pheophytin a. Positions 170 and 189 each coordinate [CaMn4O5] cluster. The chain crosses the membrane as a helical span at residues 197 to 218 (FHMLGVAGVFGGSLFSAMHGSL). His198 is a binding site for chlorophyll a. A quinone-binding positions include His215 and 264–265 (SF). Residue His215 coordinates Fe cation. His272 contacts Fe cation. The helical transmembrane segment at 274 to 288 (FLAAWPVVGIWFTAL) threads the bilayer. Residues His332, Glu333, Asp342, and Ala344 each coordinate [CaMn4O5] cluster. Residues 345–353 (AVESPSING) constitute a propeptide that is removed on maturation.

It belongs to the reaction center PufL/M/PsbA/D family. In terms of assembly, PSII is composed of 1 copy each of membrane proteins PsbA, PsbB, PsbC, PsbD, PsbE, PsbF, PsbH, PsbI, PsbJ, PsbK, PsbL, PsbM, PsbT, PsbX, PsbY, PsbZ, Psb30/Ycf12, at least 3 peripheral proteins of the oxygen-evolving complex and a large number of cofactors. It forms dimeric complexes. The cofactor is The D1/D2 heterodimer binds P680, chlorophylls that are the primary electron donor of PSII, and subsequent electron acceptors. It shares a non-heme iron and each subunit binds pheophytin, quinone, additional chlorophylls, carotenoids and lipids. D1 provides most of the ligands for the Mn4-Ca-O5 cluster of the oxygen-evolving complex (OEC). There is also a Cl(-1) ion associated with D1 and D2, which is required for oxygen evolution. The PSII complex binds additional chlorophylls, carotenoids and specific lipids.. Post-translationally, tyr-161 forms a radical intermediate that is referred to as redox-active TyrZ, YZ or Y-Z. C-terminally processed by CTPA; processing is essential to allow assembly of the oxygen-evolving complex and thus photosynthetic growth.

It localises to the plastid. The protein localises to the chloroplast thylakoid membrane. It carries out the reaction 2 a plastoquinone + 4 hnu + 2 H2O = 2 a plastoquinol + O2. In terms of biological role, photosystem II (PSII) is a light-driven water:plastoquinone oxidoreductase that uses light energy to abstract electrons from H(2)O, generating O(2) and a proton gradient subsequently used for ATP formation. It consists of a core antenna complex that captures photons, and an electron transfer chain that converts photonic excitation into a charge separation. The D1/D2 (PsbA/PsbD) reaction center heterodimer binds P680, the primary electron donor of PSII as well as several subsequent electron acceptors. The protein is Photosystem II protein D1 of Sinapis alba (White mustard).